The primary structure comprises 243 residues: UPF0246 protein SAK_2020 (243 aa).

This sequence belongs to the UPF0246 family.

The sequence is that of UPF0246 protein SAK_2020 from Streptococcus agalactiae serotype Ia (strain ATCC 27591 / A909 / CDC SS700).